The sequence spans 902 residues: 4-hydroxyphenylacetate decarboxylase glycyl radical subunit (902 aa).

Positions 38 to 774 (KRAEDLLDVY…ATLATPDGRL (737 aa)) constitute a PFL domain. The 4-hydroxyphenylacetate site is built by Ser-348 and Cys-507. Cys-507 acts as the Cysteine radical intermediate in catalysis. The active-site Proton donor is the Glu-509. Residues His-540 and Glu-641 each contribute to the 4-hydroxyphenylacetate site. The Glycine radical domain occupies 782–902 (GSVSAYAGTD…VIARTEYEGV (121 aa)). Gly-877 carries the glycine radical modification.

This sequence belongs to the glycyl radical enzyme (GRE) family. HPAD subfamily. As to quaternary structure, heterooctamer consisting of 4 large (HpdB) subunits and 4 small (HpdC) subunits, arranged as a tetramer of heterodimers. Also forms a catalytically inactive homodimer. In terms of processing, requires the activating protein CsdA to generate the key active site glycyl radical that is involved in catalysis. Phosphorylated on serine. Phosphorylation may trigger the formation of the active heterooctamers and thereby regulates enzyme activity.

It catalyses the reaction 4-hydroxyphenylacetate + H(+) = 4-methylphenol + CO2. It carries out the reaction 3,4-dihydroxyphenylacetate + H(+) = 4-methylcatechol + CO2. Glycyl radical subunit of the HPA decarboxylase that decarboxylates phenylacetates with a hydroxyl group in the p-position. Active toward 4-hydroxyphenylacetate and 3,4-dihydroxyphenylacetate, forming 4-methylphenol and 4-methylcatechol, respectively. Is likely involved in the catabolism of aromatic amino acids such as tyrosine fermentation. 4-methylphenol (p-cresol) formation provides metabolic toxicity, which allows an active suppression of other microbes and may provide growth advantages for the producers in highly competitive environments. The large subunit is the catalytic subunit that binds the substrate. The polypeptide is 4-hydroxyphenylacetate decarboxylase glycyl radical subunit (Clostridioides difficile (strain 630) (Peptoclostridium difficile)).